We begin with the raw amino-acid sequence, 433 residues long: Anthranilate synthase component 1 (433 aa).

Residues S29 and 219-221 each bind L-tryptophan; that span reads PYT. Chorismate is bound at residue 253 to 254; the sequence is GT. E280 serves as a coordination point for Mg(2+). Residues Y368, R388, 402–404, and G404 contribute to the chorismate site; that span reads GAG. Mg(2+) is bound at residue E417.

This sequence belongs to the anthranilate synthase component I family. In terms of assembly, heterotetramer consisting of two non-identical subunits: a beta subunit (TrpG) and a large alpha subunit (TrpE). Mg(2+) serves as cofactor.

It carries out the reaction chorismate + L-glutamine = anthranilate + pyruvate + L-glutamate + H(+). Its pathway is amino-acid biosynthesis; L-tryptophan biosynthesis; L-tryptophan from chorismate: step 1/5. Its activity is regulated as follows. Feedback inhibited by tryptophan. Its function is as follows. Part of a heterotetrameric complex that catalyzes the two-step biosynthesis of anthranilate, an intermediate in the biosynthesis of L-tryptophan. In the first step, the glutamine-binding beta subunit (TrpG) of anthranilate synthase (AS) provides the glutamine amidotransferase activity which generates ammonia as a substrate that, along with chorismate, is used in the second step, catalyzed by the large alpha subunit of AS (TrpE) to produce anthranilate. In the absence of TrpG, TrpE can synthesize anthranilate directly from chorismate and high concentrations of ammonia. The sequence is that of Anthranilate synthase component 1 (trpE) from Thermococcus kodakarensis (strain ATCC BAA-918 / JCM 12380 / KOD1) (Pyrococcus kodakaraensis (strain KOD1)).